A 194-amino-acid chain; its full sequence is Holliday junction branch migration complex subunit RuvA (194 aa).

The domain I stretch occupies residues 1–64 (MISRLTGKLV…EDAHLLFGFA (64 aa)). The domain II stretch occupies residues 65–143 (TAEERKTFRQ…AHTVTDGLFA (79 aa)). Residues 144-147 (AAPA) are flexible linker. The domain III stretch occupies residues 147-194 (AADETEDIVSTLLALGYSEREAKAAVKGVPEGTDVGEGVRLALKNLLK).

The protein belongs to the RuvA family. In terms of assembly, homotetramer. Forms an RuvA(8)-RuvB(12)-Holliday junction (HJ) complex. HJ DNA is sandwiched between 2 RuvA tetramers; dsDNA enters through RuvA and exits via RuvB. An RuvB hexamer assembles on each DNA strand where it exits the tetramer. Each RuvB hexamer is contacted by two RuvA subunits (via domain III) on 2 adjacent RuvB subunits; this complex drives branch migration. In the full resolvosome a probable DNA-RuvA(4)-RuvB(12)-RuvC(2) complex forms which resolves the HJ.

It localises to the cytoplasm. The RuvA-RuvB-RuvC complex processes Holliday junction (HJ) DNA during genetic recombination and DNA repair, while the RuvA-RuvB complex plays an important role in the rescue of blocked DNA replication forks via replication fork reversal (RFR). RuvA specifically binds to HJ cruciform DNA, conferring on it an open structure. The RuvB hexamer acts as an ATP-dependent pump, pulling dsDNA into and through the RuvAB complex. HJ branch migration allows RuvC to scan DNA until it finds its consensus sequence, where it cleaves and resolves the cruciform DNA. This chain is Holliday junction branch migration complex subunit RuvA, found in Neisseria meningitidis serogroup B (strain ATCC BAA-335 / MC58).